We begin with the raw amino-acid sequence, 159 residues long: SsrA-binding protein (159 aa).

Over residues tyrosine 131 to arginine 148 the composition is skewed to basic and acidic residues. The interval tyrosine 131–alanine 159 is disordered.

This sequence belongs to the SmpB family.

The protein localises to the cytoplasm. Its function is as follows. Required for rescue of stalled ribosomes mediated by trans-translation. Binds to transfer-messenger RNA (tmRNA), required for stable association of tmRNA with ribosomes. tmRNA and SmpB together mimic tRNA shape, replacing the anticodon stem-loop with SmpB. tmRNA is encoded by the ssrA gene; the 2 termini fold to resemble tRNA(Ala) and it encodes a 'tag peptide', a short internal open reading frame. During trans-translation Ala-aminoacylated tmRNA acts like a tRNA, entering the A-site of stalled ribosomes, displacing the stalled mRNA. The ribosome then switches to translate the ORF on the tmRNA; the nascent peptide is terminated with the 'tag peptide' encoded by the tmRNA and targeted for degradation. The ribosome is freed to recommence translation, which seems to be the essential function of trans-translation. This chain is SsrA-binding protein, found in Streptomyces coelicolor (strain ATCC BAA-471 / A3(2) / M145).